Here is a 137-residue protein sequence, read N- to C-terminus: Transcription antitermination protein NusB (137 aa).

The protein belongs to the NusB family.

Functionally, involved in transcription antitermination. Required for transcription of ribosomal RNA (rRNA) genes. Binds specifically to the boxA antiterminator sequence of the ribosomal RNA (rrn) operons. The chain is Transcription antitermination protein NusB from Haemophilus ducreyi (strain 35000HP / ATCC 700724).